The primary structure comprises 132 residues: Hemoglobin heart muscle subunit alpha-type (132 aa).

Residues 1-132 (GLSDSEKSAV…GEVGAILTSS (132 aa)) form the Globin domain. Heme b contacts are provided by His-58 and His-83.

This sequence belongs to the globin family. Monomer.

Its function is as follows. This hemoglobin may replace myocardial myoglobin in this amphibian species. The polypeptide is Hemoglobin heart muscle subunit alpha-type (Aquarana catesbeiana (American bullfrog)).